Reading from the N-terminus, the 396-residue chain is 2-(3-amino-3-carboxypropyl)histidine synthase subunit 1 (396 aa).

Positions 89, 194, and 323 each coordinate [4Fe-4S] cluster. The interval 372-396 (TNNNEANRPKREKRKPHIVVRTEAS) is disordered.

It belongs to the DPH1/DPH2 family. DPH1 subfamily. Component of the 2-(3-amino-3-carboxypropyl)histidine synthase complex composed of dph-1, dph-2, dph-3 and a NADH-dependent reductase. Requires [4Fe-4S] cluster as cofactor.

The catalysed reaction is L-histidyl-[translation elongation factor 2] + S-adenosyl-L-methionine = 2-[(3S)-amino-3-carboxypropyl]-L-histidyl-[translation elongation factor 2] + S-methyl-5'-thioadenosine + H(+). Its pathway is protein modification; peptidyl-diphthamide biosynthesis. Catalyzes the first step of diphthamide biosynthesis, a post-translational modification of histidine which occurs in elongation factor 2. Dph-1 and dph-2 transfer a 3-amino-3-carboxypropyl (ACP) group from S-adenosyl-L-methionine (SAM) to a histidine residue, the reaction is assisted by a reduction system comprising dph-3 and a NADH-dependent reductase. The protein is 2-(3-amino-3-carboxypropyl)histidine synthase subunit 1 (dph-1) of Caenorhabditis elegans.